Consider the following 235-residue polypeptide: Large ribosomal subunit protein uL1 (235 aa).

Belongs to the universal ribosomal protein uL1 family. As to quaternary structure, part of the 50S ribosomal subunit.

Its function is as follows. Binds directly to 23S rRNA. The L1 stalk is quite mobile in the ribosome, and is involved in E site tRNA release. In terms of biological role, protein L1 is also a translational repressor protein, it controls the translation of the L11 operon by binding to its mRNA. The polypeptide is Large ribosomal subunit protein uL1 (Mycobacterium sp. (strain JLS)).